A 661-amino-acid polypeptide reads, in one-letter code: Transketolase (661 aa).

His30 is a binding site for substrate. Thiamine diphosphate-binding positions include His70 and Gly118 to Leu120. The segment at Ser99–Gly118 is disordered. Mg(2+) is bound at residue Asp159. The thiamine diphosphate site is built by Gly160 and Asn189. Mg(2+)-binding residues include Asn189 and Val191. Residues His266, Arg357, and Ser384 each contribute to the substrate site. His266 contributes to the thiamine diphosphate binding site. Glu411 acts as the Proton donor in catalysis. Phe437 is a binding site for thiamine diphosphate. The substrate site is built by His461, Asp469, and Arg520.

The protein belongs to the transketolase family. Homodimer. Requires Mg(2+) as cofactor. It depends on Ca(2+) as a cofactor. The cofactor is Mn(2+). Co(2+) is required as a cofactor. Thiamine diphosphate serves as cofactor.

It catalyses the reaction D-sedoheptulose 7-phosphate + D-glyceraldehyde 3-phosphate = aldehydo-D-ribose 5-phosphate + D-xylulose 5-phosphate. Functionally, catalyzes the transfer of a two-carbon ketol group from a ketose donor to an aldose acceptor, via a covalent intermediate with the cofactor thiamine pyrophosphate. The chain is Transketolase (tkt) from Physarum polycephalum (Slime mold).